Here is a 592-residue protein sequence, read N- to C-terminus: Glycosyltransferase 25 family member (592 aa).

Residues 1–13 (MLALLLTTTIVSG) form the signal peptide. N-linked (GlcNAc...) asparagine glycans are attached at residues N249 and N510. Basic and acidic residues-rich tracts occupy residues 552–563 (RIQEPKKGDKEQ) and 579–592 (GEHD…RSEL). The segment at 552–592 (RIQEPKKGDKEQLPNAPALLSESGIGQGEHDLETKNRRSEL) is disordered. A Prevents secretion from ER motif is present at residues 589 to 592 (RSEL).

It belongs to the glycosyltransferase 25 family.

It is found in the endoplasmic reticulum lumen. In Anopheles gambiae (African malaria mosquito), this protein is Glycosyltransferase 25 family member.